The chain runs to 218 residues: Ribose-5-phosphate isomerase A (218 aa).

Substrate-binding positions include threonine 27–threonine 30, aspartate 80–aspartate 83, and lysine 93–glycine 96. Glutamate 102 (proton acceptor) is an active-site residue. Lysine 120 contacts substrate.

Belongs to the ribose 5-phosphate isomerase family. Homodimer.

It carries out the reaction aldehydo-D-ribose 5-phosphate = D-ribulose 5-phosphate. Its pathway is carbohydrate degradation; pentose phosphate pathway; D-ribose 5-phosphate from D-ribulose 5-phosphate (non-oxidative stage): step 1/1. Functionally, catalyzes the reversible conversion of ribose-5-phosphate to ribulose 5-phosphate. The polypeptide is Ribose-5-phosphate isomerase A (Thiobacillus denitrificans (strain ATCC 25259 / T1)).